We begin with the raw amino-acid sequence, 128 residues long: Large-conductance mechanosensitive channel (128 aa).

A run of 2 helical transmembrane segments spans residues 10 to 30 (FAMRGNVVDMAVGVIIGGAFG) and 76 to 96 (GMFIQNVFDFIIIAFAIFLMI).

It belongs to the MscL family. Homopentamer.

The protein localises to the cell inner membrane. In terms of biological role, channel that opens in response to stretch forces in the membrane lipid bilayer. May participate in the regulation of osmotic pressure changes within the cell. In Actinobacillus succinogenes (strain ATCC 55618 / DSM 22257 / CCUG 43843 / 130Z), this protein is Large-conductance mechanosensitive channel.